A 441-amino-acid chain; its full sequence is Ribosomal protein uS12 methylthiotransferase RimO (441 aa).

The MTTase N-terminal domain maps to 8–118 (PKIGFVSLGC…VLEHVHHYVP (111 aa)). Residues Cys-17, Cys-53, Cys-82, Cys-150, Cys-154, and Cys-157 each coordinate [4Fe-4S] cluster. One can recognise a Radical SAM core domain in the interval 136-373 (LTPRHYAYLK…MQLQQQISAE (238 aa)). One can recognise a TRAM domain in the interval 376–441 (QEKVGKEILV…DEYDLWGSRV (66 aa)).

Belongs to the methylthiotransferase family. RimO subfamily. The cofactor is [4Fe-4S] cluster.

It is found in the cytoplasm. It carries out the reaction L-aspartate(89)-[ribosomal protein uS12]-hydrogen + (sulfur carrier)-SH + AH2 + 2 S-adenosyl-L-methionine = 3-methylsulfanyl-L-aspartate(89)-[ribosomal protein uS12]-hydrogen + (sulfur carrier)-H + 5'-deoxyadenosine + L-methionine + A + S-adenosyl-L-homocysteine + 2 H(+). In terms of biological role, catalyzes the methylthiolation of an aspartic acid residue of ribosomal protein uS12. The sequence is that of Ribosomal protein uS12 methylthiotransferase RimO from Escherichia fergusonii (strain ATCC 35469 / DSM 13698 / CCUG 18766 / IAM 14443 / JCM 21226 / LMG 7866 / NBRC 102419 / NCTC 12128 / CDC 0568-73).